The sequence spans 113 residues: Large ribosomal subunit protein uL22 (113 aa).

Belongs to the universal ribosomal protein uL22 family. As to quaternary structure, part of the 50S ribosomal subunit.

Functionally, this protein binds specifically to 23S rRNA; its binding is stimulated by other ribosomal proteins, e.g. L4, L17, and L20. It is important during the early stages of 50S assembly. It makes multiple contacts with different domains of the 23S rRNA in the assembled 50S subunit and ribosome. Its function is as follows. The globular domain of the protein is located near the polypeptide exit tunnel on the outside of the subunit, while an extended beta-hairpin is found that lines the wall of the exit tunnel in the center of the 70S ribosome. This Mycoplasmopsis synoviae (strain 53) (Mycoplasma synoviae) protein is Large ribosomal subunit protein uL22.